We begin with the raw amino-acid sequence, 416 residues long: MSLKVFLQAGVACAALSLAGAAGASAEPLKIALVETLSGPQASTGLLYRAAVLYQLGKINEAGGFNGEKIQILEYDNQGGPVGAADRVKAAIADGAQIIVQGSSSAVAGQITEDVRKYNLRNKGKEVLYLNLGAEALELTGSKCHFYHFRFSPNAAIRFKTVAQGMKDKGILGERAYSINQNYSWGVDVENTVVANAKEIGYEVVDKTLHEVNKIQDFSPYVAKIQAANVDTVFTGNWSNDLLLLMKAASGAGLKAKFATSFLDQPGNIGNAGAIAEGHIVSTPFNPEANGEASMAFAEDYKKVTGHYPSYAEPAAVFGLQLFGEALKNVKPGEGKINTTDIALAIENASVKTPMGDYSMRSDDHQAKFPMVVQEVSKKARIKADGTEYGFLPFKTFTGDESIDPVQESCSMKRPG.

The N-terminal stretch at 1–26 (MSLKVFLQAGVACAALSLAGAAGASA) is a signal peptide.

This sequence belongs to the leucine-binding protein family.

Functionally, component of an amino-acid transport system. The protein is Leu/Ile/Val-binding protein homolog 4 of Brucella melitensis biotype 1 (strain ATCC 23456 / CCUG 17765 / NCTC 10094 / 16M).